The primary structure comprises 829 residues: Leucine--tRNA ligase (829 aa).

The short motif at Pro-40–His-51 is the 'HIGH' region element. Positions Lys-609–Ser-613 match the 'KMSKS' region motif. Residue Lys-612 participates in ATP binding.

Belongs to the class-I aminoacyl-tRNA synthetase family.

The protein localises to the cytoplasm. It carries out the reaction tRNA(Leu) + L-leucine + ATP = L-leucyl-tRNA(Leu) + AMP + diphosphate. The chain is Leucine--tRNA ligase from Lactococcus lactis subsp. lactis (strain IL1403) (Streptococcus lactis).